Here is a 483-residue protein sequence, read N- to C-terminus: Phosphoenolpyruvate carboxylase (483 aa).

Positions 1–20 are disordered; that stretch reads MKVPRCMSTQHPDNVNPPFF.

It belongs to the PEPCase type 2 family. In terms of assembly, homotetramer. It depends on Mg(2+) as a cofactor.

The enzyme catalyses oxaloacetate + phosphate = phosphoenolpyruvate + hydrogencarbonate. Inhibited by NaCl, KCl, ATP, ADP, GTP and aspartate. Unlike E.coli, not regulated by acetyl-CoA. Its function is as follows. Catalyzes the irreversible beta-carboxylation of phosphoenolpyruvate (PEP) to form oxaloacetate (OAA), a four-carbon dicarboxylic acid source for the tricarboxylic acid cycle. The polypeptide is Phosphoenolpyruvate carboxylase (ppcA) (Methanothermobacter thermautotrophicus (strain ATCC 29096 / DSM 1053 / JCM 10044 / NBRC 100330 / Delta H) (Methanobacterium thermoautotrophicum)).